A 473-amino-acid polypeptide reads, in one-letter code: UDP-N-acetylmuramate--L-alanine ligase (473 aa).

112 to 118 is an ATP binding site; it reads GTHGKTT.

It belongs to the MurCDEF family.

It is found in the cytoplasm. It carries out the reaction UDP-N-acetyl-alpha-D-muramate + L-alanine + ATP = UDP-N-acetyl-alpha-D-muramoyl-L-alanine + ADP + phosphate + H(+). Its pathway is cell wall biogenesis; peptidoglycan biosynthesis. Its function is as follows. Cell wall formation. The sequence is that of UDP-N-acetylmuramate--L-alanine ligase from Nitrosomonas europaea (strain ATCC 19718 / CIP 103999 / KCTC 2705 / NBRC 14298).